The primary structure comprises 157 residues: ATP synthase subunit b (157 aa).

A helical transmembrane segment spans residues 11 to 31 (LIMFAMFTWFCMKFIWPPIVM).

This sequence belongs to the ATPase B chain family. F-type ATPases have 2 components, F(1) - the catalytic core - and F(0) - the membrane proton channel. F(1) has five subunits: alpha(3), beta(3), gamma(1), delta(1), epsilon(1). F(0) has three main subunits: a(1), b(2) and c(10-14). The alpha and beta chains form an alternating ring which encloses part of the gamma chain. F(1) is attached to F(0) by a central stalk formed by the gamma and epsilon chains, while a peripheral stalk is formed by the delta and b chains.

It localises to the cell inner membrane. Functionally, f(1)F(0) ATP synthase produces ATP from ADP in the presence of a proton or sodium gradient. F-type ATPases consist of two structural domains, F(1) containing the extramembraneous catalytic core and F(0) containing the membrane proton channel, linked together by a central stalk and a peripheral stalk. During catalysis, ATP synthesis in the catalytic domain of F(1) is coupled via a rotary mechanism of the central stalk subunits to proton translocation. Its function is as follows. Component of the F(0) channel, it forms part of the peripheral stalk, linking F(1) to F(0). In Vesicomyosocius okutanii subsp. Calyptogena okutanii (strain HA), this protein is ATP synthase subunit b.